Consider the following 309-residue polypeptide: D-alanine--D-alanine ligase (309 aa).

In terms of domain architecture, ATP-grasp spans 104–301 (KQIWQGSDLP…FDALCVEILA (198 aa)). ATP is bound at residue 130–185 (VASLGLPVIIKPVHEGSSIGMSKVEKIEDFAPAIEKATAHDAIVMAEKWITGREYT). Mg(2+) contacts are provided by aspartate 255, glutamate 268, and asparagine 270.

Belongs to the D-alanine--D-alanine ligase family. Mg(2+) is required as a cofactor. It depends on Mn(2+) as a cofactor.

It is found in the cytoplasm. The catalysed reaction is 2 D-alanine + ATP = D-alanyl-D-alanine + ADP + phosphate + H(+). Its pathway is cell wall biogenesis; peptidoglycan biosynthesis. Functionally, cell wall formation. The protein is D-alanine--D-alanine ligase of Acinetobacter baylyi (strain ATCC 33305 / BD413 / ADP1).